The chain runs to 501 residues: Probable cysteine desulfurase, mitochondrial (501 aa).

Residues 172–173 (AT), Asn252, Gln280, and 300–302 (SAH) contribute to the pyridoxal 5'-phosphate site. Residue Lys303 is modified to N6-(pyridoxal phosphate)lysine. Thr340 contributes to the pyridoxal 5'-phosphate binding site. The Cysteine persulfide intermediate role is filled by Cys425. Cys425 lines the [2Fe-2S] cluster pocket.

Belongs to the class-V pyridoxal-phosphate-dependent aminotransferase family. NifS/IscS subfamily. Requires pyridoxal 5'-phosphate as cofactor.

It is found in the mitochondrion. The catalysed reaction is (sulfur carrier)-H + L-cysteine = (sulfur carrier)-SH + L-alanine. Its function is as follows. Catalyzes the removal of elemental sulfur from cysteine to produce alanine. It supplies the inorganic sulfur for iron-sulfur (Fe-S) clusters. Plays a role in both tRNA-processing and mitochondrial metabolism. Involved in the 2-thio-modification of both 5-carboxymethylaminomethyl-2-thiouridine in mitochondrial tRNAs and 5-methoxycarbonylmethyl-2-thiouridine (mcm5s2U) in cytoplasmic tRNAs. This is Probable cysteine desulfurase, mitochondrial from Schizosaccharomyces pombe (strain 972 / ATCC 24843) (Fission yeast).